A 146-amino-acid polypeptide reads, in one-letter code: Histone H2A.1 (146 aa).

M1 bears the N-acetylmethionine mark. The disordered stretch occupies residues 1–24 (MDATKTTKGAGGRKGGPRKKSVTK). The SPKK motif signature appears at 142-145 (SPKK).

This sequence belongs to the histone H2A family. As to quaternary structure, the nucleosome is a histone octamer containing two molecules each of H2A, H2B, H3 and H4 assembled in one H3-H4 heterotetramer and two H2A-H2B heterodimers. The octamer wraps approximately 147 bp of DNA. High expression in meristematic tissues, in cells of the root pericycle and in shoot cortical cells undergoing endoduplication of their DNA.

The protein resides in the nucleus. It is found in the chromosome. Functionally, core component of nucleosome. Nucleosomes wrap and compact DNA into chromatin, limiting DNA accessibility to the cellular machineries which require DNA as a template. Histones thereby play a central role in transcription regulation, DNA repair, DNA replication and chromosomal stability. DNA accessibility is regulated via a complex set of post-translational modifications of histones, also called histone code, and nucleosome remodeling. The protein is Histone H2A.1 of Solanum lycopersicum (Tomato).